Here is a 1835-residue protein sequence, read N- to C-terminus: Urea amidolyase (1835 aa).

ATP-binding positions include glycine 122–threonine 129 and lysine 747. Positions leucine 632–tyrosine 1075 constitute a Biotin carboxylation domain. One can recognise an ATP-grasp domain in the interval arginine 751–alanine 948. Phosphoserine is present on serine 803. ATP is bound by residues glutamate 830 and asparagine 865. The Biotinyl-binding domain maps to aspartate 1754–glutamate 1832. The residue at position 1798 (lysine 1798) is an N6-biotinyllysine.

In terms of assembly, monomer. It depends on biotin as a cofactor.

It catalyses the reaction urea + hydrogencarbonate + ATP = urea-1-carboxylate + ADP + phosphate + H(+). The catalysed reaction is urea-1-carboxylate + H2O + 3 H(+) = 2 NH4(+) + 2 CO2. It participates in nitrogen metabolism; urea degradation; CO(2) and NH(3) from urea (allophanate route): step 1/2. It functions in the pathway nitrogen metabolism; urea degradation; CO(2) and NH(3) from urea (allophanate route): step 2/2. In terms of biological role, hydrolysis of urea to ammonia and CO(2). This chain is Urea amidolyase (DUR1,2), found in Saccharomyces cerevisiae (strain ATCC 204508 / S288c) (Baker's yeast).